Here is a 240-residue protein sequence, read N- to C-terminus: Tumor protein p53-inducible nuclear protein 1 (240 aa).

The short motif at 25-37 is the LIR element; the sequence is EKEDDEWILVDFI.

As to quaternary structure, interacts with p53/TP53 and HIPK2. Interacts with PRKCG, GABARAP, GABARAPL1, GABARAPL2, MAP1LC3A, MAP1LC3B and MAP1LC3C. In terms of tissue distribution, ubiquitously expressed.

It is found in the cytoplasm. The protein localises to the cytosol. It localises to the nucleus. Its subcellular location is the PML body. The protein resides in the cytoplasmic vesicle. It is found in the autophagosome. Antiproliferative and proapoptotic protein involved in cell stress response which acts as a dual regulator of transcription and autophagy. Acts as a positive regulator of autophagy. In response to cellular stress or activation of autophagy, relocates to autophagosomes where it interacts with autophagosome-associated proteins GABARAP, GABARAPL1/L2, MAP1LC3A/B/C and regulates autophagy. Acts as an antioxidant and plays a major role in p53/TP53-driven oxidative stress response. Possesses both a p53/TP53-independent intracellular reactive oxygen species (ROS) regulatory function and a p53/TP53-dependent transcription regulatory function. Positively regulates p53/TP53 and p73/TP73 and stimulates their capacity to induce apoptosis and regulate cell cycle. In response to double-strand DNA breaks, promotes p53/TP53 phosphorylation on 'Ser-46' and subsequent apoptosis. Acts as a tumor suppressor by inducing cell death by an autophagy and caspase-dependent mechanism. Can reduce cell migration by regulating the expression of SPARC. The protein is Tumor protein p53-inducible nuclear protein 1 (TP53INP1) of Homo sapiens (Human).